A 286-amino-acid polypeptide reads, in one-letter code: NAD kinase (286 aa).

D74 acts as the Proton acceptor in catalysis. Residues 74 to 75 (DG), 148 to 149 (ND), D178, A186, 189 to 194 (TAYNLS), and Q244 each bind NAD(+).

It belongs to the NAD kinase family. The cofactor is a divalent metal cation.

It is found in the cytoplasm. The enzyme catalyses NAD(+) + ATP = ADP + NADP(+) + H(+). In terms of biological role, involved in the regulation of the intracellular balance of NAD and NADP, and is a key enzyme in the biosynthesis of NADP. Catalyzes specifically the phosphorylation on 2'-hydroxyl of the adenosine moiety of NAD to yield NADP. The sequence is that of NAD kinase from Campylobacter jejuni subsp. jejuni serotype O:2 (strain ATCC 700819 / NCTC 11168).